A 377-amino-acid chain; its full sequence is Flagellar P-ring protein (377 aa).

Positions 1–33 (MRYPVSTGIAAPAWFAFFCAWAGLWTFSLPVQA) are cleaved as a signal peptide.

Belongs to the FlgI family. The basal body constitutes a major portion of the flagellar organelle and consists of four rings (L,P,S, and M) mounted on a central rod.

It is found in the periplasm. The protein resides in the bacterial flagellum basal body. Its function is as follows. Assembles around the rod to form the L-ring and probably protects the motor/basal body from shearing forces during rotation. This is Flagellar P-ring protein from Nitrosospira multiformis (strain ATCC 25196 / NCIMB 11849 / C 71).